Here is a 477-residue protein sequence, read N- to C-terminus: Salivary plasminogen activator alpha 1 (477 aa).

The signal sequence occupies residues 1 to 36 (MVNTMKTKLLCVLLLCGAVFSLPRQETYRQLARGSR). A Fibronectin type-I domain is found at 40-82 (VACKDEITQMTYRRQESWLRPEVRSKRVEHCQCDRGQARCHTV). Disulfide bonds link Cys42–Cys72, Cys70–Cys79, Cys87–Cys98, Cys92–Cys109, Cys111–Cys120, Cys128–Cys209, Cys149–Cys191, Cys180–Cys204, Cys214–Cys345, Cys257–Cys273, Cys265–Cys334, Cys359–Cys434, Cys391–Cys407, and Cys424–Cys452. One can recognise an EGF-like domain in the interval 83–121 (PVNSCSEPRCFNGGTCWQAVYFSDFVCQCPAGYTGKRCE). The region spanning 128–209 (CYEGQGVTYR…TSESCSVPVC (82 aa)) is the Kringle domain. N-linked (GlcNAc...) asparagine glycosylation is present at Asn153. Positions 226–476 (STGGLFTDIT…YLGWIRDNMH (251 aa)) constitute a Peptidase S1 domain. Residues His272 and Asp321 each act as charge relay system in the active site. Asn398 carries an N-linked (GlcNAc...) asparagine glycan. Ser428 acts as the Charge relay system in catalysis.

This sequence belongs to the peptidase S1 family. In terms of assembly, monomer.

The protein resides in the secreted. The enzyme catalyses Specific cleavage of Arg-|-Val bond in plasminogen to form plasmin.. With respect to regulation, activity toward plasminogen is stimulated in the presence of fibrin I. Its function is as follows. Probably essential to support the feeding habits of this exclusively haematophagous animal. Potent thrombolytic agent. The protein is Salivary plasminogen activator alpha 1 of Desmodus rotundus (Vampire bat).